Consider the following 619-residue polypeptide: Dynein axonemal intermediate chain 2 (619 aa).

WD repeat units lie at residues 214–254 (KPSS…LVAE), 261–302 (SHRD…EPTE), 362–401 (GHHG…SSIM), 405–445 (YHMA…CDPA), and 450–489 (VCDD…STLQ). The interval 566–619 (EALKKKPKPKKASIEVEGEDELEDIAGEEEESGIIMGEDTGEDDMDEKNEGGAP) is disordered. Over residues 581–597 (VEGEDELEDIAGEEEES) the composition is skewed to acidic residues.

The protein belongs to the dynein intermediate chain family. In terms of assembly, consists of at least two heavy chains and a number of intermediate and light chains. Interacts with DNAAF2. Interacts with DNAAF6/PIH1D3. Interacts with HEATR2; probably involved in outer arm dynein assembly. Interacts with CFAP53.

It is found in the cytoplasm. It localises to the cytoskeleton. The protein localises to the cilium axoneme. The protein resides in the dynein axonemal particle. Part of the dynein complex of respiratory cilia. This Rattus norvegicus (Rat) protein is Dynein axonemal intermediate chain 2 (Dnai2).